A 126-amino-acid polypeptide reads, in one-letter code: Small ribosomal subunit protein uS12 (126 aa).

The disordered stretch occupies residues 1–29 (MPTIQQLIRQPRAPKKRRSKSPALQKCPQ). A 3-methylthioaspartic acid modification is found at Asp89.

Belongs to the universal ribosomal protein uS12 family. In terms of assembly, part of the 30S ribosomal subunit. Contacts proteins S8 and S17. May interact with IF1 in the 30S initiation complex.

Its function is as follows. With S4 and S5 plays an important role in translational accuracy. In terms of biological role, interacts with and stabilizes bases of the 16S rRNA that are involved in tRNA selection in the A site and with the mRNA backbone. Located at the interface of the 30S and 50S subunits, it traverses the body of the 30S subunit contacting proteins on the other side and probably holding the rRNA structure together. The combined cluster of proteins S8, S12 and S17 appears to hold together the shoulder and platform of the 30S subunit. This is Small ribosomal subunit protein uS12 from Protochlamydia amoebophila (strain UWE25).